The primary structure comprises 283 residues: Protein/nucleic acid deglycase HchA (283 aa).

Zn(2+) is bound by residues histidine 86, glutamate 91, and histidine 123. Cysteine 185 (nucleophile) is an active-site residue.

It belongs to the peptidase C56 family. HchA subfamily. As to quaternary structure, homodimer.

The protein localises to the cytoplasm. It carries out the reaction N(omega)-(1-hydroxy-2-oxopropyl)-L-arginyl-[protein] + H2O = lactate + L-arginyl-[protein] + H(+). The enzyme catalyses N(6)-(1-hydroxy-2-oxopropyl)-L-lysyl-[protein] + H2O = lactate + L-lysyl-[protein] + H(+). The catalysed reaction is S-(1-hydroxy-2-oxopropyl)-L-cysteinyl-[protein] + H2O = lactate + L-cysteinyl-[protein] + H(+). It catalyses the reaction N(omega)-(1-hydroxy-2-oxoethyl)-L-arginyl-[protein] + H2O = L-arginyl-[protein] + glycolate + H(+). It carries out the reaction N(6)-(1-hydroxy-2-oxoethyl)-L-lysyl-[protein] + H2O = glycolate + L-lysyl-[protein] + H(+). The enzyme catalyses S-(1-hydroxy-2-oxoethyl)-L-cysteinyl-[protein] + H2O = glycolate + L-cysteinyl-[protein] + H(+). The catalysed reaction is N(2)-(1-hydroxy-2-oxopropyl)-dGTP + H2O = lactate + dGTP + H(+). It catalyses the reaction N(2)-(1-hydroxy-2-oxopropyl)-GTP + H2O = lactate + GTP + H(+). It carries out the reaction N(2)-(1-hydroxy-2-oxopropyl)-GDP + H2O = lactate + GDP + H(+). The enzyme catalyses N(2)-(1-hydroxy-2-oxopropyl)-GMP + H2O = lactate + GMP + H(+). The catalysed reaction is N(2)-(1-hydroxy-2-oxoethyl)-dGTP + H2O = dGTP + glycolate + H(+). It catalyses the reaction N(2)-(1-hydroxy-2-oxoethyl)-GTP + H2O = glycolate + GTP + H(+). It carries out the reaction N(2)-(1-hydroxy-2-oxoethyl)-GDP + H2O = glycolate + GDP + H(+). The enzyme catalyses N(2)-(1-hydroxy-2-oxoethyl)-GMP + H2O = glycolate + GMP + H(+). The catalysed reaction is an N(2)-(1-hydroxy-2-oxopropyl)-guanosine in RNA + H2O = a guanosine in RNA + lactate + H(+). It catalyses the reaction an N(2)-(1-hydroxy-2-oxopropyl)-2'-deoxyguanosine in DNA + H2O = a 2'-deoxyguanosine in DNA + lactate + H(+). It carries out the reaction an N(2)-(1-hydroxy-2-oxoethyl)-guanosine in RNA + H2O = a guanosine in RNA + glycolate + H(+). The enzyme catalyses an N(2)-(1-hydroxy-2-oxoethyl)-2'-deoxyguanosine in DNA + H2O = a 2'-deoxyguanosine in DNA + glycolate + H(+). In terms of biological role, protein and nucleotide deglycase that catalyzes the deglycation of the Maillard adducts formed between amino groups of proteins or nucleotides and reactive carbonyl groups of glyoxals. Thus, functions as a protein deglycase that repairs methylglyoxal- and glyoxal-glycated proteins, and releases repaired proteins and lactate or glycolate, respectively. Deglycates cysteine, arginine and lysine residues in proteins, and thus reactivates these proteins by reversing glycation by glyoxals. Acts on early glycation intermediates (hemithioacetals and aminocarbinols), preventing the formation of Schiff bases and advanced glycation endproducts (AGE). Also functions as a nucleotide deglycase able to repair glycated guanine in the free nucleotide pool (GTP, GDP, GMP, dGTP) and in DNA and RNA. Is thus involved in a major nucleotide repair system named guanine glycation repair (GG repair), dedicated to reversing methylglyoxal and glyoxal damage via nucleotide sanitization and direct nucleic acid repair. Plays an important role in protecting cells from carbonyl stress. In Shigella sonnei (strain Ss046), this protein is Protein/nucleic acid deglycase HchA.